We begin with the raw amino-acid sequence, 295 residues long: N-acetylmuramic acid 6-phosphate etherase (295 aa).

Residues threonine 53–lysine 216 enclose the SIS domain. Glutamate 81 acts as the Proton donor in catalysis. Residue glutamate 112 is part of the active site.

It belongs to the GCKR-like family. MurNAc-6-P etherase subfamily. As to quaternary structure, homodimer.

It carries out the reaction N-acetyl-D-muramate 6-phosphate + H2O = N-acetyl-D-glucosamine 6-phosphate + (R)-lactate. Its pathway is amino-sugar metabolism; N-acetylmuramate degradation. Specifically catalyzes the cleavage of the D-lactyl ether substituent of MurNAc 6-phosphate, producing GlcNAc 6-phosphate and D-lactate. The polypeptide is N-acetylmuramic acid 6-phosphate etherase (Staphylococcus saprophyticus subsp. saprophyticus (strain ATCC 15305 / DSM 20229 / NCIMB 8711 / NCTC 7292 / S-41)).